The chain runs to 206 residues: GTP cyclohydrolase 1 (206 aa).

Residues Cys95, His98, and Cys166 each contribute to the Zn(2+) site.

This sequence belongs to the GTP cyclohydrolase I family. As to quaternary structure, toroid-shaped homodecamer, composed of two pentamers of five dimers.

The catalysed reaction is GTP + H2O = 7,8-dihydroneopterin 3'-triphosphate + formate + H(+). Its pathway is cofactor biosynthesis; 7,8-dihydroneopterin triphosphate biosynthesis; 7,8-dihydroneopterin triphosphate from GTP: step 1/1. This chain is GTP cyclohydrolase 1, found in Bartonella quintana (strain Toulouse) (Rochalimaea quintana).